Reading from the N-terminus, the 686-residue chain is Potassium-transporting ATPase ATP-binding subunit 2 (686 aa).

4 helical membrane-spanning segments follow: residues 37–57 (MFVV…PNLF), 64–84 (MILY…FANF), 223–243 (LLVS…PMAI), and 255–275 (VALT…AIGI). D306 functions as the 4-aspartylphosphate intermediate in the catalytic mechanism. Residues D343, E347, 376 to 383 (FTAQTRMS), and K395 contribute to the ATP site. Residues D518 and D522 each coordinate Mg(2+). The next 3 helical transmembrane spans lie at 588 to 608 (FAII…LNIM), 616 to 636 (AILS…PLAM), and 656 to 676 (VYGV…DLVI).

Belongs to the cation transport ATPase (P-type) (TC 3.A.3) family. Type IA subfamily. The system is composed of three essential subunits: KdpA, KdpB and KdpC.

Its subcellular location is the cell membrane. The enzyme catalyses K(+)(out) + ATP + H2O = K(+)(in) + ADP + phosphate + H(+). Part of the high-affinity ATP-driven potassium transport (or Kdp) system, which catalyzes the hydrolysis of ATP coupled with the electrogenic transport of potassium into the cytoplasm. This subunit is responsible for energy coupling to the transport system and for the release of the potassium ions to the cytoplasm. The protein is Potassium-transporting ATPase ATP-binding subunit 2 of Listeria innocua serovar 6a (strain ATCC BAA-680 / CLIP 11262).